The primary structure comprises 136 residues: Peptide methionine sulfoxide reductase MsrB (136 aa).

Residues 6–128 form the MsrB domain; the sequence is EVSLYKELTD…NSAALSFTDE (123 aa). Zn(2+) is bound by residues cysteine 45, cysteine 48, cysteine 94, and cysteine 97. The active-site Nucleophile is cysteine 117.

This sequence belongs to the MsrB Met sulfoxide reductase family. It depends on Zn(2+) as a cofactor.

It carries out the reaction L-methionyl-[protein] + [thioredoxin]-disulfide + H2O = L-methionyl-(R)-S-oxide-[protein] + [thioredoxin]-dithiol. The sequence is that of Peptide methionine sulfoxide reductase MsrB from Photorhabdus laumondii subsp. laumondii (strain DSM 15139 / CIP 105565 / TT01) (Photorhabdus luminescens subsp. laumondii).